The primary structure comprises 414 residues: Imidazolonepropionase (414 aa).

Fe(3+) contacts are provided by His-73 and His-75. His-73 and His-75 together coordinate Zn(2+). Residues Arg-82, Tyr-145, and His-178 each contribute to the 4-imidazolone-5-propanoate site. Tyr-145 contributes to the N-formimidoyl-L-glutamate binding site. His-249 contributes to the Fe(3+) binding site. His-249 is a Zn(2+) binding site. Gln-252 contacts 4-imidazolone-5-propanoate. Position 324 (Asp-324) interacts with Fe(3+). Asp-324 is a Zn(2+) binding site. Residues Asn-326 and Gly-328 each contribute to the N-formimidoyl-L-glutamate site. 4-imidazolone-5-propanoate is bound at residue Ser-329.

The protein belongs to the metallo-dependent hydrolases superfamily. HutI family. Zn(2+) is required as a cofactor. It depends on Fe(3+) as a cofactor.

It localises to the cytoplasm. The catalysed reaction is 4-imidazolone-5-propanoate + H2O = N-formimidoyl-L-glutamate. Its pathway is amino-acid degradation; L-histidine degradation into L-glutamate; N-formimidoyl-L-glutamate from L-histidine: step 3/3. In terms of biological role, catalyzes the hydrolytic cleavage of the carbon-nitrogen bond in imidazolone-5-propanoate to yield N-formimidoyl-L-glutamate. It is the third step in the universal histidine degradation pathway. The chain is Imidazolonepropionase from Shewanella pealeana (strain ATCC 700345 / ANG-SQ1).